A 403-amino-acid polypeptide reads, in one-letter code: Riboflavin biosynthesis protein RibBA (403 aa).

The tract at residues 1 to 204 (MKNKVFASIG…IGELVNYRRR (204 aa)) is DHBP synthase. D-ribulose 5-phosphate-binding positions include 30–31 (RE), Asp35, 143–147 (RTGHT), and Glu167. Position 31 (Glu31) interacts with Mg(2+). Position 146 (His146) interacts with Mg(2+). The interval 205-403 (TEKFISEIVN…EKMGHMLKKV (199 aa)) is GTP cyclohydrolase II. 255 to 259 (RVHSS) provides a ligand contact to GTP. Residues Cys260, Cys271, and Cys273 each coordinate Zn(2+). Residues Gln276, 298–300 (EGR), and Thr320 contribute to the GTP site. Asp332 (proton acceptor; for GTP cyclohydrolase activity) is an active-site residue. Arg334 serves as the catalytic Nucleophile; for GTP cyclohydrolase activity. GTP contacts are provided by Thr355 and Lys360.

It in the N-terminal section; belongs to the DHBP synthase family. This sequence in the C-terminal section; belongs to the GTP cyclohydrolase II family. Mg(2+) serves as cofactor. It depends on Mn(2+) as a cofactor. Zn(2+) is required as a cofactor.

It catalyses the reaction D-ribulose 5-phosphate = (2S)-2-hydroxy-3-oxobutyl phosphate + formate + H(+). The catalysed reaction is GTP + 4 H2O = 2,5-diamino-6-hydroxy-4-(5-phosphoribosylamino)-pyrimidine + formate + 2 phosphate + 3 H(+). Its pathway is cofactor biosynthesis; riboflavin biosynthesis; 2-hydroxy-3-oxobutyl phosphate from D-ribulose 5-phosphate: step 1/1. It participates in cofactor biosynthesis; riboflavin biosynthesis; 5-amino-6-(D-ribitylamino)uracil from GTP: step 1/4. Functionally, catalyzes the conversion of D-ribulose 5-phosphate to formate and 3,4-dihydroxy-2-butanone 4-phosphate. In terms of biological role, catalyzes the conversion of GTP to 2,5-diamino-6-ribosylamino-4(3H)-pyrimidinone 5'-phosphate (DARP), formate and pyrophosphate. The polypeptide is Riboflavin biosynthesis protein RibBA (Endomicrobium trichonymphae).